Reading from the N-terminus, the 540-residue chain is Chaperonin GroEL (540 aa).

Residues 29–32, 86–90, Gly413, 476–478, and Asp492 contribute to the ATP site; these read TLGP, DGTTT, and NAA.

Belongs to the chaperonin (HSP60) family. Forms a cylinder of 14 subunits composed of two heptameric rings stacked back-to-back. Interacts with the co-chaperonin GroES.

Its subcellular location is the cytoplasm. It carries out the reaction ATP + H2O + a folded polypeptide = ADP + phosphate + an unfolded polypeptide.. Together with its co-chaperonin GroES, plays an essential role in assisting protein folding. The GroEL-GroES system forms a nano-cage that allows encapsulation of the non-native substrate proteins and provides a physical environment optimized to promote and accelerate protein folding. In Streptococcus gordonii (strain Challis / ATCC 35105 / BCRC 15272 / CH1 / DL1 / V288), this protein is Chaperonin GroEL.